The primary structure comprises 446 residues: Carbamoyl phosphate synthase small chain, chloroplastic (446 aa).

Low complexity predominate over residues 1–32; the sequence is MAAPPATASAPSLRPSAASPRAAAARSVAVPS. Positions 1 to 44 are disordered; it reads MAAPPATASAPSLRPSAASPRAAAARSVAVPSGPRTVGPRRDGG. Residues 1–50 constitute a chloroplast transit peptide; that stretch reads MAAPPATASAPSLRPSAASPRAAAARSVAVPSGPRTVGPRRDGGRFLGVR. The 186-residue stretch at 261–446 folds into the Glutamine amidotransferase type-1 domain; the sequence is HVVAYDFGIK…FIEMMKNNRL (186 aa). Cysteine 336 functions as the Nucleophile in the catalytic mechanism. Residues histidine 420 and glutamate 422 contribute to the active site.

It belongs to the CarA family. As to quaternary structure, heterodimer composed of 2 chains; the small (or glutamine) chain promotes the hydrolysis of glutamine to ammonia, which is used by the large (or ammonia) chain to synthesize carbamoyl phosphate.

It is found in the plastid. The protein localises to the chloroplast. It carries out the reaction hydrogencarbonate + L-glutamine + 2 ATP + H2O = carbamoyl phosphate + L-glutamate + 2 ADP + phosphate + 2 H(+). The catalysed reaction is L-glutamine + H2O = L-glutamate + NH4(+). It participates in amino-acid biosynthesis; L-arginine biosynthesis; carbamoyl phosphate from bicarbonate: step 1/1. Its pathway is pyrimidine metabolism; UMP biosynthesis via de novo pathway; (S)-dihydroorotate from bicarbonate: step 1/3. Functionally, small subunit of the arginine-specific carbamoyl phosphate synthase (CPSase). CPSase catalyzes the formation of carbamoyl phosphate from the ammonia moiety of glutamine, carbonate, and phosphate donated by ATP, the first step of the arginine biosynthetic pathway. The small subunit (glutamine amidotransferase) binds and cleaves glutamine to supply the large subunit with the substrate ammonia. The chain is Carbamoyl phosphate synthase small chain, chloroplastic (CARA) from Oryza sativa subsp. japonica (Rice).